The sequence spans 875 residues: Metal transporter CNNM2 (875 aa).

Residues 1 to 250 (MIGCGACEPE…TKMIVGEEKK (250 aa)) lie on the Extracellular side of the membrane. A glycan (N-linked (GlcNAc...) asparagine) is linked at asparagine 112. The disordered stretch occupies residues 121–149 (TEHERRRHTPSERGLGGPAPPEPDSGPQR). A helical membrane pass occupies residues 251 to 271 (FLLPFWLQVIFISLLLCLSGM). Residues 251-431 (FLLPFWLQVI…DPYNDLVKEE (181 aa)) enclose the CNNM transmembrane domain. Topologically, residues 272–313 (FSGLNLGLMALDPMELRIVQNCGTEKEKNYAKRIEPVRRQGN) are cytoplasmic. The segment at residues 314–334 (YLLCSLLLGNVLVNTTLTILL) is an intramembrane region (helical). Residues 335-338 (DDIA) lie on the Cytoplasmic side of the membrane. Residues 339 to 359 (GSGLVAVVVSTIGIVIFGEIV) form a helical membrane-spanning segment. Topologically, residues 360–368 (PQAICSRHG) are extracellular. Residues 369–389 (LAVGANTIFLTKFFMMMTFPA) traverse the membrane as a helical segment. Topologically, residues 390 to 875 (SYPVSKLLDC…NHSLHSEGAI (486 aa)) are cytoplasmic. CBS domains follow at residues 450–511 (MTPL…CTPL) and 518–584 (YNHP…ILDE). The interval 741-763 (AGSPGENKSPPRPCGLNHSDSLS) is disordered. Residue serine 761 is modified to Phosphoserine.

It belongs to the ACDP family. Isoform 1 and isoform 2 may interact with each other. The N-terminus is cleaved within the endoplasmic reticulum. The signal peptidase complex seems to be involved in the processing, but the exact cleavage site has not been identified. In terms of tissue distribution, widely expressed, with highest levels in kidney, lung, spleen and testis. In the kidney, predominantly expressed in the distal convoluted tubule and, at lower levels, in the connecting tubule (at protein level).

It is found in the cell membrane. In terms of biological role, divalent metal cation transporter. Mediates transport of divalent metal cations in an order of Mg(2+) &gt; Co(2+) &gt; Mn(2+) &gt; Sr(2+) &gt; Ba(2+) &gt; Cu(2+) &gt; Fe(2+). In Mus musculus (Mouse), this protein is Metal transporter CNNM2 (Cnnm2).